A 196-amino-acid chain; its full sequence is Probable nicotinate-nucleotide adenylyltransferase (196 aa).

The protein belongs to the NadD family.

It catalyses the reaction nicotinate beta-D-ribonucleotide + ATP + H(+) = deamido-NAD(+) + diphosphate. The protein operates within cofactor biosynthesis; NAD(+) biosynthesis; deamido-NAD(+) from nicotinate D-ribonucleotide: step 1/1. In terms of biological role, catalyzes the reversible adenylation of nicotinate mononucleotide (NaMN) to nicotinic acid adenine dinucleotide (NaAD). The sequence is that of Probable nicotinate-nucleotide adenylyltransferase from Thermotoga petrophila (strain ATCC BAA-488 / DSM 13995 / JCM 10881 / RKU-1).